A 484-amino-acid polypeptide reads, in one-letter code: 6-phosphogluconate dehydrogenase, decarboxylating (484 aa).

NADP(+)-binding positions include Gly11–Gly16, Asn34–Thr36, Val76–Ala78, and Asn104. Substrate-binding positions include Asn104 and Ser130–Gly132. Lys185 serves as the catalytic Proton acceptor. Residue His188–Asn189 coordinates substrate. Catalysis depends on Glu192, which acts as the Proton donor. Tyr193, Lys262, Arg289, Arg447, and His453 together coordinate substrate.

The protein belongs to the 6-phosphogluconate dehydrogenase family. As to quaternary structure, homodimer.

The enzyme catalyses 6-phospho-D-gluconate + NADP(+) = D-ribulose 5-phosphate + CO2 + NADPH. It participates in carbohydrate degradation; pentose phosphate pathway; D-ribulose 5-phosphate from D-glucose 6-phosphate (oxidative stage): step 3/3. Catalyzes the oxidative decarboxylation of 6-phosphogluconate to ribulose 5-phosphate and CO(2), with concomitant reduction of NADP to NADPH. The protein is 6-phosphogluconate dehydrogenase, decarboxylating of Aggregatibacter actinomycetemcomitans (Actinobacillus actinomycetemcomitans).